The sequence spans 284 residues: MTVPVLRTLSALRSATREWHLAGETIGVVPTMGALHDGHLSLVAAAKSACDRVIVTIFVNPKQFNKASDLASYPRTEEDDARKLARFDVDAVYAPDVSQIYPEGFCTNVSVAGMTDVLCGAHRPGHFDGVATVVTKLFTQTSADKAFFGEKDFQQLMVVQRMARDLDIPIEVVGCPTIREEDGLAMSSRNLLLSDRARTMAPRMHEIMQEAATALGQGAPFDALQATALRQLTAAGFTDVDYFELRSCASLSLLDHASVPARLFAAAWLAGVRLIDNIDVPVAR.

32–39 serves as a coordination point for ATP; the sequence is MGALHDGH. The Proton donor role is filled by histidine 39. Residue glutamine 63 coordinates (R)-pantoate. Beta-alanine is bound at residue glutamine 63. 149–152 provides a ligand contact to ATP; it reads GEKD. Glutamine 155 is a (R)-pantoate binding site. Residues isoleucine 178 and 186 to 189 each bind ATP; that span reads MSSR.

This sequence belongs to the pantothenate synthetase family. As to quaternary structure, homodimer.

It localises to the cytoplasm. It carries out the reaction (R)-pantoate + beta-alanine + ATP = (R)-pantothenate + AMP + diphosphate + H(+). It functions in the pathway cofactor biosynthesis; (R)-pantothenate biosynthesis; (R)-pantothenate from (R)-pantoate and beta-alanine: step 1/1. In terms of biological role, catalyzes the condensation of pantoate with beta-alanine in an ATP-dependent reaction via a pantoyl-adenylate intermediate. The sequence is that of Pantothenate synthetase from Roseobacter denitrificans (strain ATCC 33942 / OCh 114) (Erythrobacter sp. (strain OCh 114)).